Consider the following 377-residue polypeptide: Iris (377 aa).

N-linked (GlcNAc...) asparagine glycans are attached at residues Asn-11 and Asn-226.

Belongs to the serpin family. Female saliva (at protein level). Female salivary gland (at protein level).

It is found in the secreted. In terms of biological role, serine protease inhibitor with anticoagulant and immunosuppressive properties that can modulate blood feeding of ticks on vertebrate species. Strongly inhibits human leukocyte elastase (ELANE) and porcine pancreatic elastase. Moderately inhibits human tPA/tissue-type plasminogen activator (PLAT), coagulation factor Xa (F10), thrombin (F2) and trypsin. Does not inhibit human plasmin (PLG). Inhibits platelet aggregation. Inhibits the intrinsic pathway of blood coagulation in the host. Inhibits fibrinolysis in the host. Inhibits proliferation of mouse splenocytes. Decreases the number of IFN-gamma (IFNG)-producing human peripheral blood mononuclear cells (PBMCs) after stimulation with phytohemagglutinin A (PHA). Increases the number of IL10-producing human PBMCs after stimulation with lipopolysaccharides (LPS) with no significant effect on IL10 production. Inhibits production of IFNG, IL6, TNF-alpha (TNF) and CXCL8 by human PBMCs. Binds to monocyte/macrophage subpopulation of the host PBMCs. Increases both survival rate and survival time in mice with LPS-induced endotoxemic shock. This chain is Iris, found in Ixodes ricinus (Common tick).